Reading from the N-terminus, the 502-residue chain is ATP synthase subunit alpha (502 aa).

Residue 169-176 (GDRQTGKT) coordinates ATP.

The protein belongs to the ATPase alpha/beta chains family. As to quaternary structure, F-type ATPases have 2 components, CF(1) - the catalytic core - and CF(0) - the membrane proton channel. CF(1) has five subunits: alpha(3), beta(3), gamma(1), delta(1), epsilon(1). CF(0) has three main subunits: a(1), b(2) and c(9-12). The alpha and beta chains form an alternating ring which encloses part of the gamma chain. CF(1) is attached to CF(0) by a central stalk formed by the gamma and epsilon chains, while a peripheral stalk is formed by the delta and b chains.

Its subcellular location is the cell membrane. It catalyses the reaction ATP + H2O + 4 H(+)(in) = ADP + phosphate + 5 H(+)(out). Produces ATP from ADP in the presence of a proton gradient across the membrane. The alpha chain is a regulatory subunit. This chain is ATP synthase subunit alpha, found in Clostridium perfringens (strain ATCC 13124 / DSM 756 / JCM 1290 / NCIMB 6125 / NCTC 8237 / Type A).